Reading from the N-terminus, the 4080-residue chain is Hybrid PKS-NRPS synthetase poxE (4080 aa).

A Ketosynthase family 3 (KS3) domain is found at 8–442 (REPIAIVGSG…GTNAHAIIEA (435 aa)). Catalysis depends on for beta-ketoacyl synthase activity residues C181, H320, and H362. The tract at residues 554–878 (VFTGQGAQWA…QRGMNDVEAM (325 aa)) is malonyl-CoA:ACP transacylase (MAT) domain. The segment at 944 to 1078 (HPILGTRCPD…GRLVITYGPV (135 aa)) is N-terminal hotdog fold. Residues 944–1246 (HPILGTRCPD…AVPLEATNAD (303 aa)) form the PKS/mFAS DH domain. The interval 945 to 1243 (PILGTRCPDG…GIHAVPLEAT (299 aa)) is dehydratase (DH) domain. H976 serves as the catalytic Proton acceptor; for dehydratase activity. A C-terminal hotdog fold region spans residues 1093–1246 (MVDVPSERFY…AVPLEATNAD (154 aa)). Residue D1152 is the Proton donor; for dehydratase activity of the active site. The interval 1400–1585 (HFSDYLASVV…GVDTFTSDAD (186 aa)) is methyltransferase (MT) domain. The ketoreductase (KR)domain stretch occupies residues 2118–2292 (TYWLVGLTGS…AGSVMNIGAI (175 aa)). The interval 2399 to 2478 (TTDEIYEVIK…TIGEIIKFVL (80 aa)) is peptidyl carrier protein. The Carrier 1 domain occupies 2405–2481 (EVIKECFIVK…EIIKFVLEKL (77 aa)). At S2441 the chain carries O-(pantetheine 4'-phosphoryl)serine. Residues 2488–2569 (SLGLSPPTGA…AASPSIHTEE (82 aa)) are disordered. Residues 2511–2525 (VVVERRNVPRLEKKI) show a composition bias toward basic and acidic residues. The segment covering 2528–2545 (SAGSRTSSSVTGTSKSVS) has biased composition (low complexity). Positions 2551 to 2565 (DTASSQTSEAASPSI) are enriched in polar residues. Residues 2607 to 3036 (KEPLSFGQSR…DSKQPGGHVS (430 aa)) form a condensation region. The interval 3069–3478 (DMAKQYPQKL…DGRLRIEGRI (410 aa)) is adenylation. A Carrier 2 domain is found at 3593–3673 (AHLNEAQAQM…KMALLIKPQE (81 aa)). Positions 3598 to 3670 (AQAQMVQLWE…TLEKMALLIK (73 aa)) are thiolation. Residue S3633 is modified to O-(pantetheine 4'-phosphoryl)serine. The reductase (RED) domain stretch occupies residues 3740–3959 (LTGATGFIGQ…DFVPVEQVVR (220 aa)).

It in the C-terminal section; belongs to the NRP synthetase family.

It functions in the pathway secondary metabolite biosynthesis. Hybrid PKS-NRPS synthetase; part of the gene cluster that mediates the biosynthesis of oxaleimides, cytotoxic compounds containing an unusual disubstituted succinimide moiety. The first step of the pathway is provided by the HR-PKS poxF that serves in a new mode of collaborative biosynthesis with the PKS-NRPS poxE, by providing the olefin containing amino acid substrate via the synthesis of an ACP-bound dec-4-enoate. The cytochrome P450 monooxygenase poxM-catalyzed oxidation at the alpha-position creates the enzyme-bound 2-hydroxydec-4-enoyl-ACP thioester, which may be prone to spontaneous hydrolysis to yield 2-hydroxydec-4-enoic acid due to increased electrophilicity of the carbonyl. 2-hydroxydec-4-enoic acid can then be further oxidized by poxM to yield the alpha-ketoacid 2-oxodec-4-enoicacid, which is reductively aminated by the aminotransferase poxL to yield (S,E)-2-aminodec-4-enoic acid. The Hybrid PKS-NRPS synthetase poxE then performs condensation between the octaketide product of its PKS modules and the amino group of (S,E)-2-aminodec-4-enoic acid which is activated and incorporated by the adenylation domain. The resulting aminoacyl product can be cyclized by the Diels-Alderase PoxQ and reductively released by the reductive (R) domain of poxE to yield an aldehyde intermediate. The released aldehyde is then substrate for a Knoevenagel condensation by the hydrolyase poxO followed by an oxidation at the 5-position of the pyrrolidone ring. The presence of the olefin from the amino acid building block allows for migration of the substituted allyl group to occur. This allylic transposition reaction takes place in a conjugate addition, semipinacol-like fashion to yield a succinimide intermediate. Iterative two-electron oxidations of the C7 methyl of the succinimide intermediate to the carboxylic acid can be catalyzed by one of two remaining cytochrome P450 monooxygenasess poxC or poxD to yield oxaleimide A. Subsequent oxidation yields the maleimide scaffold oxaleimide I. Both oxaleimide A and oxaleimide I can undergo oxidative modifications in the decalin ring to yield the series of products oxaleimides B to H. This is Hybrid PKS-NRPS synthetase poxE from Penicillium oxalicum (strain 114-2 / CGMCC 5302) (Penicillium decumbens).